Reading from the N-terminus, the 347-residue chain is Cell division protein FtsQ (347 aa).

A disordered region spans residues 1-55; it reads MARNGNPQFPDERSTATRAKATEPEELDDRFSDLEPEEDSPFLRSQKRVPVRRGP. The Cytoplasmic segment spans residues 1 to 66; that stretch reads MARNGNPQFP…PSKKAANRVK (66 aa). The segment covering 10–33 has biased composition (basic and acidic residues); sequence PDERSTATRAKATEPEELDDRFSD. Residues 67-87 form a helical membrane-spanning segment; it reads IALIVLGVLVVIGGVWMALSA. Residues 88-347 lie on the Periplasmic side of the membrane; it reads YGEHSWRFRL…PTAHTSGRRH (260 aa). The POTRA domain occupies 98–166; it reads ESSDSIEVGG…DRIRVQVTER (69 aa). Residues 308–347 are disordered; sequence DSHPSAAKPTAPAVAPAVEKPAVAKPAVAKPTAHTSGRRH. Positions 313–340 are enriched in low complexity; it reads AAKPTAPAVAPAVEKPAVAKPAVAKPTA.

This sequence belongs to the FtsQ/DivIB family. FtsQ subfamily.

The protein localises to the cell inner membrane. Functionally, essential cell division protein. This Koribacter versatilis (strain Ellin345) protein is Cell division protein FtsQ.